We begin with the raw amino-acid sequence, 35 residues long: Coatomer subunit alpha (35 aa).

In terms of assembly, oligomeric complex that consists of at least the alpha, beta, beta', gamma, delta, epsilon and zeta subunits. Interacts with SCYL1. Interacts with JAGN1. Interacts with TMEM41B. Interacts with SVEP1. Probably interacts with PEX11A. As to expression, gastric, duodenal and jejunal mucosa. Circulates in the blood. Seems to be confined to specific endocrine cells.

In terms of biological role, xenin stimulates exocrine pancreatic secretion. It inhibits pentagastrin-stimulated secretion of acid, to induce exocrine pancreatic secretion and to affect small and large intestinal motility. In the gut, xenin interacts with the neurotensin receptor. The sequence is that of Coatomer subunit alpha (COPA) from Canis lupus familiaris (Dog).